The chain runs to 344 residues: MARPRHQPGGLCLLLLLLCQFMEDRSAQAGNCWLRQAKNGRCQVLYKTELSKEECCSTGRLSTSWTEEDVNDNTLFKWMIFNGGAPNCIPCKETCENVDCGPGKKCRMNKKNKPRCVCAPDCSNITWKGPVCGLDGKTYRNECALLKARCKEQPELQVQYQGKCKKTCRDVFCPGSSTCVVDQTNNAYCVTCNRICPEPTSSEQYLCGNDGVTYPSACHLRKATCLLGRSIGLAYEGKCIKAKSCDDIQCTGGKKCLWDFKVGRGRCSLCGELCPESKSEEPVCASDNATYASECAMKEAACSSGVLLEVKHSGSCNSISEDTEDEEEDEDQDYSFPISSILEW.

An N-terminal signal peptide occupies residues 1–29; it reads MARPRHQPGGLCLLLLLLCQFMEDRSAQA. In terms of domain architecture, TB spans 30–103; the sequence is GNCWLRQAKN…TCENVDCGPG (74 aa). 8 cysteine pairs are disulfide-bonded: C32-C55, C42-C88, C56-C91, C95-C106, C100-C116, C118-C150, C122-C143, and C132-C164. Residues 94–117 enclose the Follistatin-like 1 domain; it reads TCENVDCGPGKKCRMNKKNKPRCV. 3 Kazal-like domains span residues 112-166, 186-241, and 261-318; these read NKPR…KCKK, NAYC…KCIK, and KVGR…SCNS. N-linked (GlcNAc...) asparagine glycosylation is present at N124. The Follistatin-like 2 domain occupies 167–190; sequence TCRDVFCPGSSTCVVDQTNNAYCV. 3 cysteine pairs are disulfide-bonded: C192–C225, C196–C218, and C207–C239. In terms of domain architecture, Follistatin-like 3 spans 244–268; the sequence is SCDDIQCTGGKKCLWDFKVGRGRCS. Cystine bridges form between C270-C302, C274-C295, and C284-C316. N-linked (GlcNAc...) asparagine glycosylation is present at N288. The tract at residues 316–344 is disordered; the sequence is CNSISEDTEDEEEDEDQDYSFPISSILEW. Positions 321–333 are enriched in acidic residues; the sequence is EDTEDEEEDEDQD.

As to quaternary structure, interacts with GDF11. Interacts with activin A/INHBA. Interacts with myostatin/MSTN.

It localises to the secreted. The protein localises to the nucleus. It is found in the nucleolus. In terms of biological role, multifunctional regulatory protein whose primary function is to antagonize members of the transforming growth factor beta (TGF-beta) superfamily including activin, myostatin, GDF11 or bone morphogenetic proteins (BMPs). Mechanistically, binds to these ligands in the extracellular space, blocking their type II receptor-binding site to inhibit downstream signaling. Plays an essential role in muscle fiber formation and growth both by preventing the repressive effects of myostatin and through SMAD3/AKT/mTOR signaling independently of myostatin. Also promotes neural differentiation by antagonizing the action BMP4. Acts as a specific inhibitor of the biosynthesis and secretion of pituitary follicle stimulating hormone (FSH) by sequestering activin A/INHBA. On the other hand, translocates into the nucleus where it down-regulates rRNA synthesis and ribosome biogenesis to maintain cellular energy homeostasis by binding to rDNA. This chain is Follistatin, found in Bos taurus (Bovine).